The primary structure comprises 358 residues: Ion-translocating oxidoreductase complex subunit D (358 aa).

The next 4 helical transmembrane spans lie at 19-39, 41-61, 79-99, and 125-145; these read IMLWVILAMMPAFFTQIYYFG, GVVLQSALAIGTAIIAEFIAI, LTALILAMAIPPYAPYWVIII, and IGYVILLISFPLQMTTWMPPI. Position 186 is an FMN phosphoryl threonine (T186). The next 5 helical transmembrane spans lie at 220–240, 248–268, 271–291, 297–317, and 321–341; these read FAQGWWQINVAFLAGGIFLIL, IPVAMLVTFFCLATATAFTGF, LSAISQLVSGAMMFGAFFIAT, SITPRGKIIFGALVGLFVYLI, and GNYPDGVAFAILLSNICVPLI.

The protein belongs to the NqrB/RnfD family. The complex is composed of six subunits: RnfA, RnfB, RnfC, RnfD, RnfE and RnfG. The cofactor is FMN.

Its subcellular location is the cell inner membrane. In terms of biological role, part of a membrane-bound complex that couples electron transfer with translocation of ions across the membrane. The polypeptide is Ion-translocating oxidoreductase complex subunit D (Haemophilus influenzae (strain PittGG)).